We begin with the raw amino-acid sequence, 182 residues long: Gremlin-1 (182 aa).

The signal sequence occupies residues 1-24; it reads MNCLVYALGSLFLLSGLLLPSSEG. Residues 23 to 65 are disordered; that stretch reads EGKKKVSGSQGAIPPPDKGQPNDSEQGQAQPGDRVRGKGKGQA. Asn-44 is a glycosylation site (N-linked (GlcNAc...) asparagine). 4 disulfides stabilise this stretch: Cys-92–Cys-142, Cys-106–Cys-156, Cys-116–Cys-174, and Cys-120–Cys-176. The region spanning 92-182 is the CTCK domain; that stretch reads CKTQPLKQTI…QCRCISIDLD (91 aa).

The protein belongs to the DAN family.

It is found in the secreted. Functionally, cytokine that has an axial patterning activity. Acts like BMP antagonist in embryonic explants. Blocks the BMP2 activity. The polypeptide is Gremlin-1 (grem1) (Xenopus laevis (African clawed frog)).